The following is a 282-amino-acid chain: Formamidopyrimidine-DNA glycosylase (282 aa).

Residue Pro2 is the Schiff-base intermediate with DNA of the active site. Glu3 acts as the Proton donor in catalysis. Lys60 serves as the catalytic Proton donor; for beta-elimination activity. DNA-binding residues include His99, Arg118, and Arg163. The FPG-type zinc-finger motif lies at 248-282 (WVYGRTGEPCRVCGTSIERLKLGGRSAHFCPRCQA). Arg272 serves as the catalytic Proton donor; for delta-elimination activity.

The protein belongs to the FPG family. Monomer. Requires Zn(2+) as cofactor.

The catalysed reaction is Hydrolysis of DNA containing ring-opened 7-methylguanine residues, releasing 2,6-diamino-4-hydroxy-5-(N-methyl)formamidopyrimidine.. The enzyme catalyses 2'-deoxyribonucleotide-(2'-deoxyribose 5'-phosphate)-2'-deoxyribonucleotide-DNA = a 3'-end 2'-deoxyribonucleotide-(2,3-dehydro-2,3-deoxyribose 5'-phosphate)-DNA + a 5'-end 5'-phospho-2'-deoxyribonucleoside-DNA + H(+). Functionally, involved in base excision repair of DNA damaged by oxidation or by mutagenic agents. Acts as a DNA glycosylase that recognizes and removes damaged bases. Has a preference for oxidized purines, such as 7,8-dihydro-8-oxoguanine (8-oxoG). Has AP (apurinic/apyrimidinic) lyase activity and introduces nicks in the DNA strand. Cleaves the DNA backbone by beta-delta elimination to generate a single-strand break at the site of the removed base with both 3'- and 5'-phosphates. In Rippkaea orientalis (strain PCC 8801 / RF-1) (Cyanothece sp. (strain PCC 8801)), this protein is Formamidopyrimidine-DNA glycosylase.